A 555-amino-acid chain; its full sequence is Formate--tetrahydrofolate ligase (555 aa).

Residue 65 to 72 (TPAGEGKT) participates in ATP binding.

This sequence belongs to the formate--tetrahydrofolate ligase family.

It catalyses the reaction (6S)-5,6,7,8-tetrahydrofolate + formate + ATP = (6R)-10-formyltetrahydrofolate + ADP + phosphate. Its pathway is one-carbon metabolism; tetrahydrofolate interconversion. The polypeptide is Formate--tetrahydrofolate ligase (Caldanaerobacter subterraneus subsp. tengcongensis (strain DSM 15242 / JCM 11007 / NBRC 100824 / MB4) (Thermoanaerobacter tengcongensis)).